The primary structure comprises 511 residues: Colicin-B (511 aa).

The TonB box motif lies at 17–24 (DTMVVWPS). The next 2 membrane-spanning stretches (helical) occupy residues 455 to 475 (MASA…LIAF) and 477 to 497 (LSAT…GAFI).

Belongs to the channel forming colicin family.

Its subcellular location is the cell membrane. This colicin is a channel-forming colicin. This class of transmembrane toxins depolarize the cytoplasmic membrane, leading to dissipation of cellular energy. In terms of biological role, colicins are polypeptide toxins produced by and active against E.coli and closely related bacteria. The chain is Colicin-B (cba) from Escherichia coli.